Here is a 125-residue protein sequence, read N- to C-terminus: Prefoldin subunit beta (125 aa).

It belongs to the prefoldin subunit beta family. In terms of assembly, heterohexamer of two alpha and four beta subunits.

It localises to the cytoplasm. Functionally, molecular chaperone capable of stabilizing a range of proteins. Seems to fulfill an ATP-independent, HSP70-like function in archaeal de novo protein folding. This is Prefoldin subunit beta from Pyrobaculum islandicum (strain DSM 4184 / JCM 9189 / GEO3).